The following is a 303-amino-acid chain: Bifunctional protein FolD (303 aa).

Residues 168–170 (GRS), Thr197, and Val238 each bind NADP(+).

Belongs to the tetrahydrofolate dehydrogenase/cyclohydrolase family. As to quaternary structure, homodimer.

The catalysed reaction is (6R)-5,10-methylene-5,6,7,8-tetrahydrofolate + NADP(+) = (6R)-5,10-methenyltetrahydrofolate + NADPH. It carries out the reaction (6R)-5,10-methenyltetrahydrofolate + H2O = (6R)-10-formyltetrahydrofolate + H(+). It functions in the pathway one-carbon metabolism; tetrahydrofolate interconversion. Catalyzes the oxidation of 5,10-methylenetetrahydrofolate to 5,10-methenyltetrahydrofolate and then the hydrolysis of 5,10-methenyltetrahydrofolate to 10-formyltetrahydrofolate. This is Bifunctional protein FolD from Desulfosudis oleivorans (strain DSM 6200 / JCM 39069 / Hxd3) (Desulfococcus oleovorans).